The chain runs to 514 residues: CENP-B homolog protein 1 (514 aa).

The region spanning 69–144 (DIKKIRAPKF…RRRHYIQQSA (76 aa)) is the HTH CENPB-type domain.

It localises to the nucleus. The protein localises to the chromosome. Its subcellular location is the centromere. Its function is as follows. Binds to centromeric K-type repeat DNA and ARS3002 DNA. The CBH-binding consensus sequence is Py-Pu-A-T-A-T-Py-Pu-T-A. In Schizosaccharomyces pombe (strain 972 / ATCC 24843) (Fission yeast), this protein is CENP-B homolog protein 1 (cbh1).